The chain runs to 162 residues: Endoribonuclease YbeY (162 aa).

Positions 127, 131, and 137 each coordinate Zn(2+).

Belongs to the endoribonuclease YbeY family. Zn(2+) serves as cofactor.

The protein resides in the cytoplasm. Single strand-specific metallo-endoribonuclease involved in late-stage 70S ribosome quality control and in maturation of the 3' terminus of the 16S rRNA. This Acetivibrio thermocellus (strain ATCC 27405 / DSM 1237 / JCM 9322 / NBRC 103400 / NCIMB 10682 / NRRL B-4536 / VPI 7372) (Clostridium thermocellum) protein is Endoribonuclease YbeY.